The sequence spans 575 residues: Probable methionine--tRNA ligase, mitochondrial (575 aa).

The short motif at 52-62 (FYVNGPPHIGH) is the 'HIGH' region element. Residues 352–356 (KMSKS) carry the 'KMSKS' region motif. Lys355 lines the ATP pocket.

It belongs to the class-I aminoacyl-tRNA synthetase family.

The protein localises to the mitochondrion matrix. It carries out the reaction tRNA(Met) + L-methionine + ATP = L-methionyl-tRNA(Met) + AMP + diphosphate. This is Probable methionine--tRNA ligase, mitochondrial (mmetS) from Dictyostelium discoideum (Social amoeba).